The chain runs to 240 residues: tRNA pseudouridine synthase A (240 aa).

The Nucleophile role is filled by D50. Y109 serves as a coordination point for substrate.

It belongs to the tRNA pseudouridine synthase TruA family. As to quaternary structure, homodimer.

The enzyme catalyses uridine(38/39/40) in tRNA = pseudouridine(38/39/40) in tRNA. Its function is as follows. Formation of pseudouridine at positions 38, 39 and 40 in the anticodon stem and loop of transfer RNAs. In Campylobacter jejuni (strain RM1221), this protein is tRNA pseudouridine synthase A.